Consider the following 138-residue polypeptide: ATP synthase epsilon chain 2 (138 aa).

It belongs to the ATPase epsilon chain family. In terms of assembly, F-type ATPases have 2 components, CF(1) - the catalytic core - and CF(0) - the membrane proton channel. CF(1) has five subunits: alpha(3), beta(3), gamma(1), delta(1), epsilon(1). CF(0) has three main subunits: a, b and c.

It is found in the cell inner membrane. In terms of biological role, produces ATP from ADP in the presence of a proton gradient across the membrane. This Syntrophotalea carbinolica (strain DSM 2380 / NBRC 103641 / GraBd1) (Pelobacter carbinolicus) protein is ATP synthase epsilon chain 2.